The following is a 552-amino-acid chain: DNA ligase (552 aa).

Glu244 provides a ligand contact to ATP. Lys246 serves as the catalytic N6-AMP-lysine intermediate. 6 residues coordinate ATP: Arg251, Arg266, Glu296, Phe336, Arg408, and Lys414.

It belongs to the ATP-dependent DNA ligase family. Mg(2+) serves as cofactor.

It carries out the reaction ATP + (deoxyribonucleotide)n-3'-hydroxyl + 5'-phospho-(deoxyribonucleotide)m = (deoxyribonucleotide)n+m + AMP + diphosphate.. Its function is as follows. DNA ligase that seals nicks in double-stranded DNA during DNA replication, DNA recombination and DNA repair. This is DNA ligase from Methanothrix thermoacetophila (strain DSM 6194 / JCM 14653 / NBRC 101360 / PT) (Methanosaeta thermophila).